The primary structure comprises 234 residues: Cell adhesion molecule CEACAM15 (234 aa).

Positions 1 to 32 are cleaved as a signal peptide; sequence MGAETMESPSLFLCKGLLLTASLLICWNWSTA. 4 N-linked (GlcNAc...) asparagine glycosylation sites follow: N28, N75, N151, and N184. Residues 146–226 enclose the Ig-like C2-type domain; it reads PYLQLNHTRL…NSFSSKKSYP (81 aa). Residues C165 and C213 are joined by a disulfide bond.

It belongs to the immunoglobulin superfamily. CEA family. Detected in placenta.

This is Cell adhesion molecule CEACAM15 from Mus musculus (Mouse).